Consider the following 218-residue polypeptide: UPF0301 protein RPB_4502 (218 aa).

Positions 1-26 (MVTKSKRPKSGDRSGREPGNAGPIEQ) are disordered.

This sequence belongs to the UPF0301 (AlgH) family.

This Rhodopseudomonas palustris (strain HaA2) protein is UPF0301 protein RPB_4502.